We begin with the raw amino-acid sequence, 74 residues long: ATP synthase subunit c (74 aa).

Helical transmembrane passes span 9 to 29 and 54 to 74; these read IGAGIAVIALAGVGIGLGNIF and FALTEAVALYALLIAFLILFV.

The protein belongs to the ATPase C chain family. F-type ATPases have 2 components, F(1) - the catalytic core - and F(0) - the membrane proton channel. F(1) has five subunits: alpha(3), beta(3), gamma(1), delta(1), epsilon(1). F(0) has three main subunits: a(1), b(2) and c(10-14). The alpha and beta chains form an alternating ring which encloses part of the gamma chain. F(1) is attached to F(0) by a central stalk formed by the gamma and epsilon chains, while a peripheral stalk is formed by the delta and b chains.

It is found in the cell inner membrane. F(1)F(0) ATP synthase produces ATP from ADP in the presence of a proton or sodium gradient. F-type ATPases consist of two structural domains, F(1) containing the extramembraneous catalytic core and F(0) containing the membrane proton channel, linked together by a central stalk and a peripheral stalk. During catalysis, ATP synthesis in the catalytic domain of F(1) is coupled via a rotary mechanism of the central stalk subunits to proton translocation. Its function is as follows. Key component of the F(0) channel; it plays a direct role in translocation across the membrane. A homomeric c-ring of between 10-14 subunits forms the central stalk rotor element with the F(1) delta and epsilon subunits. The sequence is that of ATP synthase subunit c from Gluconacetobacter diazotrophicus (strain ATCC 49037 / DSM 5601 / CCUG 37298 / CIP 103539 / LMG 7603 / PAl5).